The sequence spans 896 residues: Echinoderm microtubule-associated protein-like 3 (896 aa).

Methionine 1 carries the post-translational modification N-acetylmethionine. The stretch at 16–43 (LQSLSQRLRVQEQEMELVKAALAEALRL) forms a coiled coil. The tract at residues 50 to 209 (PSSLQGSGTP…GGPGSRRSNY (160 aa)) is disordered. Over residues 77-88 (TPSLVSRGTQTE) the composition is skewed to polar residues. The span at 134 to 145 (PGPPGILRPLQP) shows a compositional bias: pro residues. The span at 154 to 163 (RNSSSSSSPS) shows a compositional bias: low complexity. Residues 174-189 (AISSANLLVRSGSTES) are compositionally biased toward polar residues. Residues serine 176, serine 198, and serine 204 each carry the phosphoserine modification. 13 WD repeats span residues 234-286 (RSLE…LYRP), 295-344 (GGGQ…IWDS), 350-392 (LQEI…VWDC), 398-434 (LAEIKSTNDSVLAVGFNPRDSSCIVTSGKSHVHFWNW), 448-487 (RKQGVFGKYKKPKFIPCFVFLPDGDILTGDSEGNILTWGR), 504-543 (YGIVAQAHAHEGSIFALCLRRDGTVLSGGGRDRRLVQWGP), 549-584 (QEAEIPEHFGAVRAIAEGLGSELLVGTTKNALLRGD), 589-626 (FSPVIQGHTDELWGLCTHPSQNRFLTCGHDRQLCLWDG), 629-667 (HALAWSIDLKETGLCADFHPSGAVVAVGLNTGRWLVLDT), 674-709 (SDVIDGNEQLSVVRYSPDGLYLAIGSHDNVIYIYSV), 716-755 (SSRFGRCMGHSSFITHLDWSKDGNFIMSNSGDYEILYWDV), 765-823 (RYES…LFQY), and 830-869 (APSRMYGGHGSHVTSVRFTHDDSHLVSLGGKDASIFQWRV). Residues 876-896 (GPAPATPSRTPSLSPASSLDV) form a disordered region. A compositionally biased stretch (low complexity) spans 877-896 (PAPATPSRTPSLSPASSLDV). At threonine 881 the chain carries Phosphothreonine; by CDK1. The residue at position 883 (serine 883) is a Phosphoserine.

This sequence belongs to the WD repeat EMAP family. As to quaternary structure, homotrimer; self-association is mediated by the N-terminal coiled coil. Interacts with EML2 but not with EML1. Interacts (phosphorylated at Thr-881) with TUBG1, HAUS1, HAUS2, HAUS3, HAUS4, HAUS5, HAUS6, HAUS7 and HAUS8. Phosphorylation at Thr-881 during mitosis is required for interaction with TUBG1, HAUS1, HAUS2, HAUS3, HAUS4, HAUS5, HAUS6, HAUS7 and HAUS8 and their recruitment to spindle microtubules.

The protein resides in the cytoplasm. It is found in the cytoskeleton. The protein localises to the nucleus. It localises to the midbody. Its subcellular location is the spindle. Regulates mitotic spindle assembly, microtubule (MT)-kinetochore attachment and chromosome separation via recruitment of HAUS augmin-like complex and TUBG1 to the existing MTs and promoting MT-based MT nucleation. Required for proper alignnment of chromosomes during metaphase. This Homo sapiens (Human) protein is Echinoderm microtubule-associated protein-like 3 (EML3).